A 706-amino-acid chain; its full sequence is Polycomb protein SCMH1 (706 aa).

MBT repeat units lie at residues 28-126 (FTWD…LQPP) and 134-235 (SSWP…LQPP). 2 disordered regions span residues 233-350 (QPPG…TVPS) and 576-595 (GSDR…RDPS). Composition is skewed to basic residues over residues 272–283 (RGRKPGKKRGRT) and 304–319 (FPKK…RKPR). Residues 329–340 (PTTSTPEPDTST) are compositionally biased toward low complexity. The span at 576-591 (GSDRHLESRDPPRLSG) shows a compositional bias: basic and acidic residues. One can recognise an SAM domain in the interval 597–662 (WTVEDVMQFV…SFHIDRLKQV (66 aa)).

It belongs to the SCM family. In terms of assembly, associates with a PRC1-like complex. Interacts with the SAM domain of PHC1 via its SAM domain in vitro. In terms of tissue distribution, most abundant in testis. Moderate levels detected in heart, brain, lung, liver, skeletal muscle and kidney and lower levels in spleen.

Its subcellular location is the nucleus. In terms of biological role, associates with Polycomb group (PcG) multiprotein complexes; the complex class is required to maintain the transcriptionally repressive state of some genes. The chain is Polycomb protein SCMH1 from Mus musculus (Mouse).